The primary structure comprises 247 residues: 5'-nucleotidase SurE (247 aa).

Residues Asp8, Asp9, Ser39, and Asn91 each coordinate a divalent metal cation.

Belongs to the SurE nucleotidase family. A divalent metal cation is required as a cofactor.

Its subcellular location is the cytoplasm. It catalyses the reaction a ribonucleoside 5'-phosphate + H2O = a ribonucleoside + phosphate. In terms of biological role, nucleotidase that shows phosphatase activity on nucleoside 5'-monophosphates. The protein is 5'-nucleotidase SurE of Nitrosomonas eutropha (strain DSM 101675 / C91 / Nm57).